Consider the following 104-residue polypeptide: L-rhamnose mutarotase (104 aa).

Tyr18 is a binding site for substrate. Residue His22 is the Proton donor of the active site. Residues Tyr41 and 76–77 contribute to the substrate site; that span reads WW.

The protein belongs to the rhamnose mutarotase family. As to quaternary structure, homodimer.

The protein resides in the cytoplasm. The catalysed reaction is alpha-L-rhamnose = beta-L-rhamnose. Its pathway is carbohydrate metabolism; L-rhamnose metabolism. Its function is as follows. Involved in the anomeric conversion of L-rhamnose. This is L-rhamnose mutarotase from Clostridium beijerinckii (strain ATCC 51743 / NCIMB 8052) (Clostridium acetobutylicum).